The following is a 513-amino-acid chain: Glucose-1-phosphate adenylyltransferase small subunit, chloroplastic/amyloplastic (513 aa).

The N-terminal 64 residues, 1 to 64, are a transit peptide targeting the chloroplast; the sequence is MAMAAAASPS…RRPFFFSPRA (64 aa).

Belongs to the bacterial/plant glucose-1-phosphate adenylyltransferase family. Heterotetramer. In terms of tissue distribution, leaves and starchy endosperm.

It is found in the plastid. It localises to the chloroplast. Its subcellular location is the amyloplast. It carries out the reaction alpha-D-glucose 1-phosphate + ATP + H(+) = ADP-alpha-D-glucose + diphosphate. Its pathway is glycan biosynthesis; starch biosynthesis. With respect to regulation, activated by 3'phosphoglycerate, inhibited by orthophosphate. Allosteric regulation. In terms of biological role, this protein plays a role in synthesis of starch. It catalyzes the synthesis of the activated glycosyl donor, ADP-glucose from Glc-1-P and ATP. This is Glucose-1-phosphate adenylyltransferase small subunit, chloroplastic/amyloplastic from Hordeum vulgare (Barley).